A 1320-amino-acid chain; its full sequence is MFGLDQFEPQVNSRNAGQGERNFNETGLSMNTHFKAPAFHTGGPPGPVDPAMSALGEPPILGMNMEPYGFHARGHSELHAGGLQAQPVHGFFGGQQPHHGHPGSHHPHQHHPHFGGNFGGPDPGASCLHGGRLLGYGGAAGGLGSQPPFAEGYEHMAESQGPESFGPQRPGNLPDFHSSGASSHAVPAPCLPLDQSPNRAASFHGLPSSSGSDSHSLEPRRVTNQGAVDSLEYNYPGEAPSGHFDMFSPSDSEGQLPHYAAGRQVPGGAFPGASAMPRAAGMVGLSKMHAQPPQQQPQQQQQPQQQQQQHGVFFERFSGARKMPVGLEPSVGSRHPLMQPPQQAPPPPQQQPPQQPPQQQPPPPPGLLVRQNSCPPALPRPQQGEAGTPSGGLQDGGPMLPSQHAQFEYPIHRLENRSMHPYSEPVFSMQHPPPQQAPNQRLQHFDAPPYMNVAKRPRFDFPGSAGVDRCASWNGSMHNGALDNHLSPSAYPGLPGEFTPPVPDSFPSGPPLQHPAPDHQSLQQQQQQQQQQQQQQQQQQQQQQQQQQQQRQNAALMIKQMASRNQQQRLRQPNLAQLGHPGDVGQGGLVHGGPVGGLAQPNFEREGGSTGAGRLGTFEQQAPHLAQESAWFSGPHPPPGDLLPRRMGGSGLPADCGPHDPSLAPPPPPGGSGVLFRGPLQEPMRMPGEGHVPALPSPGLQFGGSLGGLGQLQSPGAGVGLPSAASERRPPPPDFATSALGGQPGFPFGAAGRQSTPHSGPGVNSPPSAGGGGGSSGGGGGGGAYPPQPDFQPSQRTSASKLGALSLGSFNKPSSKDNLFGQSCLAALSTACQNMIASLGAPNLNVTFNKKNPPEGKRKLSQNETDGAAVAGNPGSDYFPGGTAPGAPGPGGPSGTSSSGSKASGPPNPPAQGDGTSLSPNYTLESTSGNDGKPVSGGGGRGRGRRKRDSGHVSPGTFFDKYSAAPDSGGAPGVSPGQQQASGAAVGGSSAGETRGAPTPHEKALTSPSWGKGAELLLGDQPDLIGSLDGGAKSDSSSPNVGEFASDEVSTSYANEDEVSSSSDNPQALVKASRSPLVTGSPKLPPRGVGAGEHGPKAPPPALGLGIMSNSTSTPDSYGGGGGPGHPGTPGLEQVRTPTSSSGAPPPDEIHPLEILQAQIQLQRQQFSISEDQPLGLKGGKKGECAVGASGAQNGDSELGSCCSEAVKSAMSTIDLDSLMAEHSAAWYMPADKALVDSADDDKTLAPWEKAKPQNPNSKEAHDLPANKASASQPGSHLQCLSVHCTDDVGDAKARASVPTWRSLHSDISNRFGTFVAALT.

Residue Met1 is modified to N-acetylmethionine. Disordered stretches follow at residues 1-26 (MFGL…FNET), 92-121 (FGGQ…FGGP), 147-219 (PPFA…SLEP), 231-411 (LEYN…EYPI), 423-442 (SEPV…NQRL), 474-615 (NGSM…AGRL), 629-819 (SAWF…KDNL), 840-1150 (GAPN…PDEI), and 1247-1273 (PWEK…SASQ). The span at 98–113 (HHGHPGSHHPHQHHPH) shows a compositional bias: basic residues. Low complexity-rich tracts occupy residues 202-214 (SFHG…GSDS) and 291-309 (QPPQ…QQQQ). Residues 338 to 366 (MQPPQQAPPPPQQQPPQQPPQQQPPPPPG) are compositionally biased toward pro residues. Residues 498–514 (FTPPVPDSFPSGPPLQH) are compositionally biased toward pro residues. Composition is skewed to low complexity over residues 523-550 (QQQQ…QQQQ) and 564-578 (RNQQ…LAQL). 2 stretches are compositionally biased toward gly residues: residues 582–596 (GDVG…GPVG) and 701–710 (QFGGSLGGLG). Low complexity predominate over residues 759 to 768 (SGPGVNSPPS). A compositionally biased stretch (gly residues) spans 769-784 (AGGGGGSSGGGGGGGA). 2 stretches are compositionally biased toward low complexity: residues 798–809 (SASKLGALSLGS) and 895–905 (GTSSSGSKASG). Residues 914 to 930 (DGTSLSPNYTLESTSGN) are compositionally biased toward polar residues. 2 positions are modified to phosphoserine: Ser950 and Ser954. Residues 973–984 (GVSPGQQQASGA) are compositionally biased toward low complexity. A Phosphoserine modification is found at Ser1007. Over residues 1048–1066 (EVSTSYANEDEVSSSSDNP) the composition is skewed to polar residues. Residue Ser1081 is modified to Phosphoserine. Gly residues predominate over residues 1118-1128 (YGGGGGPGHPG).

Interacts with PBX1, PKNOX1, ZBTB24, E2F7, RING1. As to expression, widely expressed in fetal and adult tissues. Highest expression is observed in fetal brain and skeletal muscle, and adult skeletal muscle.

The protein resides in the nucleus. Functionally, transcriptional activator which specifically regulates expression of TBX22 in the posterior region of the developing palate. Required during later stages of palate development for growth and medial fusion of the palatal shelves. Promotes maturation and normal function of calvarial osteoblasts, including expression of the osteoclastogenic cytokine TNFSF11/RANKL. Necessary for normal development of the membranous bones of the skull. May play a role in tumor suppression. The polypeptide is Transcriptional activator MN1 (MN1) (Homo sapiens (Human)).